Consider the following 431-residue polypeptide: tRNA(Ile)-lysidine synthase (431 aa).

19-24 (STGIDS) contributes to the ATP binding site.

This sequence belongs to the tRNA(Ile)-lysidine synthase family.

It localises to the cytoplasm. The enzyme catalyses cytidine(34) in tRNA(Ile2) + L-lysine + ATP = lysidine(34) in tRNA(Ile2) + AMP + diphosphate + H(+). Functionally, ligates lysine onto the cytidine present at position 34 of the AUA codon-specific tRNA(Ile) that contains the anticodon CAU, in an ATP-dependent manner. Cytidine is converted to lysidine, thus changing the amino acid specificity of the tRNA from methionine to isoleucine. The chain is tRNA(Ile)-lysidine synthase from Staphylococcus aureus (strain MRSA252).